A 689-amino-acid chain; its full sequence is FACT complex subunit ssrp1-B (689 aa).

2 disordered regions span residues 434–565 and 592–689; these read DNKS…KRAT and KAGA…GESD. A compositionally biased stretch (acidic residues) spans 461–477; it reads EQDDDSDDESTDEDYDL. 4 stretches are compositionally biased toward basic and acidic residues: residues 478-491, 523-532, 538-563, and 601-628; these read DKDMKKQKNDKDSS, IEPKKKESKE, EKKEKPVKEKAVKKGKKTKDPNEPKR, and SADDKKEWNDKAAQDKARYEAEMKEYKK. A DNA-binding region (HMG box) is located at residues 561–627; the sequence is PKRATTAYII…RYEAEMKEYK (67 aa). A compositionally biased stretch (polar residues) spans 638–650; it reads GPSTKKSSDQSPG.

Belongs to the SSRP1 family. Component of the FACT complex, a stable heterodimer of hmg-3 and spt-16. The FACT complex may also include hmg-4 instead of hmg-3. As to expression, expressed in the germline.

Its subcellular location is the nucleus. The protein localises to the chromosome. Functionally, component of the FACT complex, a general chromatin factor that acts to reorganize nucleosomes. The FACT complex is involved in multiple processes that require DNA as a template such as mRNA elongation, DNA replication and DNA repair. During transcription elongation the FACT complex acts as a histone chaperone that both destabilizes and restores nucleosomal structure. It facilitates the passage of RNA polymerase II and transcription by promoting the dissociation of one histone H2A-H2B dimer from the nucleosome, then subsequently promotes the reestablishment of the nucleosome following the passage of RNA polymerase II. Binds specifically to double-stranded DNA. In embryos, may function redundantly with hmg-4 to promote cell cycle progression and development of the anterior pharynx. In the germline, acts non-redundantly with hmg-4 to play a role in oocyte development. This is FACT complex subunit ssrp1-B from Caenorhabditis elegans.